The chain runs to 468 residues: Uronate isomerase (468 aa).

It belongs to the metallo-dependent hydrolases superfamily. Uronate isomerase family.

The catalysed reaction is D-glucuronate = D-fructuronate. It carries out the reaction aldehydo-D-galacturonate = keto-D-tagaturonate. Its pathway is carbohydrate metabolism; pentose and glucuronate interconversion. This Bacteroides fragilis (strain ATCC 25285 / DSM 2151 / CCUG 4856 / JCM 11019 / LMG 10263 / NCTC 9343 / Onslow / VPI 2553 / EN-2) protein is Uronate isomerase.